A 642-amino-acid chain; its full sequence is Tigger transposable element derived 5 (642 aa).

Residues 1 to 54 (MYPASPPAGPALHPVPHRARLPQPRCLAEPPRSPAPGPGSTARPPPPPAPGPRP) form a disordered region. Residues 31-53 (PRSPAPGPGSTARPPPPPAPGPR) are compositionally biased toward pro residues. Positions 57–108 (AVKMTFRKAYSIKDKLQAIERVKGGERQASVCRDFGVPGGTLRGWLKDEPKL) constitute an HTH psq-type domain. 2 DNA-binding regions (H-T-H motif) span residues 84–104 (QASV…WLKD) and 155–188 (PVIQ…WQKR). Residues 122 to 195 (QRKKMRLANE…QKRHGISSQR (74 aa)) enclose the HTH CENPB-type domain. The disordered stretch occupies residues 202 to 238 (SPVAGPAPVKEEPAQSPGAVLVPDGAPATLPHSEGGY). The DDE-1 domain occupies 240 to 365 (DEQIYNANVT…CLQQKAVLLV (126 aa)). 2 disordered regions span residues 375-400 (TSMP…SPEE) and 548-581 (GCRE…TEQG).

The protein belongs to the tigger transposable element derived protein family.

It is found in the nucleus. In Mus musculus (Mouse), this protein is Tigger transposable element derived 5 (Tigd5).